We begin with the raw amino-acid sequence, 377 residues long: MEEPEEQPPHEADTEPVVTSGASEAVPRVLPGDPQNLSDVDAFNLLLEMKLKRRRERPNLPHTVTELVAEDGSRVYVVGTAHFSDDSKRDVVKTIREVQPDVVVVELCQYRVSMLKMDERTLLREAKEISLEKLQQAIRQNGVASGLMQMLLLKVSAHITEQLGVAPGGEFREAFKEASRVPFCKFHLGDRPIPVTFKRAIAALSLWQKVKLAWGLCFLSDPISKDDVERCKQKDLLEQMMAEMVGEFPDLHRTIVSERDVYLTYMLRQAARRLELPRASDAEPRKCVPSVVVGVVGMGHVPGIEKNWTTDLNIQEIMTVPPPSASGRVSRLAVKAAALGLLGYGLYWTGRRAVSLLLALPAARHCLQRLSDAWPQK.

Position 1 is an N-acetylmethionine (M1). A disordered region spans residues 1–34 (MEEPEEQPPHEADTEPVVTSGASEAVPRVLPGDP). T65 is modified (phosphothreonine).

The sequence is that of TraB domain-containing protein (TRABD) from Bos taurus (Bovine).